We begin with the raw amino-acid sequence, 285 residues long: N(G),N(G)-dimethylarginine dimethylaminohydrolase 1 (285 aa).

Alanine 2 is subject to N-acetylalanine. The substrate site is built by leucine 30, aspartate 73, glutamate 78, aspartate 79, arginine 98, and arginine 145. Histidine 173 acts as the Proton donor in catalysis. Cysteine 222 is modified (S-nitrosocysteine). Substrate is bound at residue valine 268. Cysteine 274 bears the S-nitrosocysteine mark. Catalysis depends on cysteine 274, which acts as the Nucleophile. Cysteine 274 is a binding site for Zn(2+).

In terms of assembly, monomer. Widely distributed, highest concentrations found in brain, brain cortex and kidney (at protein level).

The catalysed reaction is N(omega),N(omega)-dimethyl-L-arginine + H2O = dimethylamine + L-citrulline. It carries out the reaction N(omega)-methyl-L-arginine + H2O = L-citrulline + methylamine. Copurifies with a tightly bound zinc ion. Activated by release of zinc. His and other agents that promote the release of bound zinc ions activate the enzyme (in vitro). Inhibited by S-nitrosylation. Zinc protects the protein against S-nitrosylation. In terms of biological role, hydrolyzes N(G),N(G)-dimethyl-L-arginine (ADMA) and N(G)-monomethyl-L-arginine (MMA) which act as inhibitors of NOS. Has therefore a role in the regulation of nitric oxide generation. The polypeptide is N(G),N(G)-dimethylarginine dimethylaminohydrolase 1 (DDAH1) (Bos taurus (Bovine)).